We begin with the raw amino-acid sequence, 75 residues long: UPF0270 protein PSPPH_1506 (75 aa).

It belongs to the UPF0270 family.

This Pseudomonas savastanoi pv. phaseolicola (strain 1448A / Race 6) (Pseudomonas syringae pv. phaseolicola (strain 1448A / Race 6)) protein is UPF0270 protein PSPPH_1506.